A 160-amino-acid chain; its full sequence is uncharacterized protein (160 aa).

This is an uncharacterized protein from Methanocaldococcus jannaschii (strain ATCC 43067 / DSM 2661 / JAL-1 / JCM 10045 / NBRC 100440) (Methanococcus jannaschii).